Here is a 364-residue protein sequence, read N- to C-terminus: GTPase Obg (364 aa).

The Obg domain occupies 1–159; it reads MKFIDEARIE…RNLRLELKVL (159 aa). The segment at 128-147 is disordered; the sequence is IHFKSSTNRAPRQKTDGKAG. Residues 160-334 enclose the OBG-type G domain; the sequence is ADVGLLGMPN…LVHAIQEYLD (175 aa). GTP-binding positions include 166–173, 191–195, 213–216, 284–287, and 315–317; these read GMPNAGKS, FTTLH, DIPG, NKLD, and SAL. The Mg(2+) site is built by S173 and T193. Positions 340-364 are disordered; sequence EDAAAAAPDQRLDPTLHNVDHDDQA. The span at 349 to 364 shows a compositional bias: basic and acidic residues; it reads QRLDPTLHNVDHDDQA.

Belongs to the TRAFAC class OBG-HflX-like GTPase superfamily. OBG GTPase family. In terms of assembly, monomer. It depends on Mg(2+) as a cofactor.

It localises to the cytoplasm. Functionally, an essential GTPase which binds GTP, GDP and possibly (p)ppGpp with moderate affinity, with high nucleotide exchange rates and a fairly low GTP hydrolysis rate. Plays a role in control of the cell cycle, stress response, ribosome biogenesis and in those bacteria that undergo differentiation, in morphogenesis control. The chain is GTPase Obg from Ralstonia pickettii (strain 12J).